The primary structure comprises 209 residues: Protease (209 aa).

Residues His-55, Asp-72, and Cys-123 contribute to the active site.

This sequence belongs to the peptidase C5 family. In terms of assembly, interacts with protease cofactor pVI-C; this interaction is necessary for protease activation.

It localises to the virion. It is found in the host nucleus. The catalysed reaction is Cleaves proteins of the adenovirus and its host cell at two consensus sites: -Yaa-Xaa-Gly-Gly-|-Xaa- and -Yaa-Xaa-Gly-Xaa-|-Gly- (in which Yaa is Met, Ile or Leu, and Xaa is any amino acid).. Requires DNA and protease cofactor for maximal activation. Inside nascent virions, becomes partially activated by binding to the viral DNA, allowing it to cleave the cofactor that binds to the protease and fully activates it. Actin, like the viral protease cofactor, seems to act as a cofactor in the cleavage of cytokeratin 18 and of actin itself. Functionally, cleaves viral precursor proteins (pTP, pIIIa, pVI, pVII, pVIII, and pX) inside newly assembled particles giving rise to mature virions. Protease complexed to its cofactor slides along the viral DNA to specifically locate and cleave the viral precursors. Mature virions have a weakened organization compared to the unmature virions, thereby facilitating subsequent uncoating. Without maturation, the particle lacks infectivity and is unable to uncoat. Late in adenovirus infection, in the cytoplasm, may participate in the cytoskeleton destruction. Cleaves host cell cytoskeletal keratins K7 and K18. This is Protease from Human adenovirus D serotype 17 (HAdV-17).